Consider the following 413-residue polypeptide: Multidrug resistance protein MdtM (413 aa).

The Cytoplasmic segment spans residues 1–14 (MQRIIQFFSQRATT). The helical transmembrane segment at 15–35 (LFFPMALILYDFAAYLTTDLI) threads the bilayer. At 36 to 51 (QPGIINVVRDFNADVS) the chain is on the periplasmic side. The chain crosses the membrane as a helical span at residues 52-72 (LAPASVSLYLAGGMALQWLLG). Residues 73 to 81 (PLSDRIGRR) are Cytoplasmic-facing. Residues 82–102 (PVLIAGALIFTLACAATLLTT) form a helical membrane-spanning segment. Topologically, residues 103 to 106 (SMTQ) are periplasmic. The helical transmembrane segment at 107-127 (FLVARFVQGTSICFIATVGYV) threads the bilayer. Residues 128–140 (TVQEAFGQTKAIK) are Cytoplasmic-facing. A helical membrane pass occupies residues 141–161 (LMAIITSIVLVAPVIGPLSGA). Topologically, residues 162–170 (ALMHFVHWK) are periplasmic. A helical transmembrane segment spans residues 171–191 (VLFGIIAVMGLLALCGLLLAM). Residues 192-225 (PETVQRGAVPFSAVSVLRDFRNVFRNPIFLTGAA) are Cytoplasmic-facing. A helical transmembrane segment spans residues 226-246 (TLSLSYIPMMSWVAVSPVILI). The Periplasmic segment spans residues 247-254 (DAGGMSTS). The helical transmembrane segment at 255-275 (QFAWAQVPVFGAVIVANMIVV) threads the bilayer. At 276 to 289 (RLVKDPTRPRFIWR) the chain is on the cytoplasmic side. A run of 2 helical transmembrane segments spans residues 290 to 310 (AVPIQLSGLATLLLGNLLLPH) and 311 to 331 (VWLWSVLGTSLYAFGIGMIFP). Topologically, residues 332–351 (TLFRFTLFSNNLPKGTVSAS) are cytoplasmic. A helical membrane pass occupies residues 352 to 372 (LNMVILTVMAVSVEVGRWLWF). At 373–376 (HGGR) the chain is on the periplasmic side. The helical transmembrane segment at 377 to 397 (LPFHLLAAVAGVIVVFTLATL) threads the bilayer. At 398–413 (LQRVRQHEAAELAAEK) the chain is on the cytoplasmic side.

This sequence belongs to the major facilitator superfamily.

It localises to the cell inner membrane. In terms of biological role, proton-dependent efflux pump. Confers resistance to a broad spectrum of chemically unrelated substrates. The chain is Multidrug resistance protein MdtM (mdtM) from Salmonella typhimurium (strain LT2 / SGSC1412 / ATCC 700720).